A 345-amino-acid polypeptide reads, in one-letter code: RNA pseudouridine synthase 1 (345 aa).

Aspartate 134 is a catalytic residue.

This sequence belongs to the pseudouridine synthase RluA family.

The catalysed reaction is a uridine in RNA = a pseudouridine in RNA. This Oryza sativa subsp. japonica (Rice) protein is RNA pseudouridine synthase 1.